We begin with the raw amino-acid sequence, 315 residues long: MPKKKTGQRKKAEKQKLRLKEIRSREVPLADLPCNAPMECDKCEKKQKSRAFCYFCQSIQRLPICAQCGKIKCMLKTGDCVVKHPGVYTTGLGMVGAICDFCEAWVCHGRKCLQNHACTCPLQNATCLECERGVWEHGGRIFKCSFCNGFLCEDDQFEHQASCQVLESENYKCQSCNKLGQYSCLRCKTCYCEDHVRRKGFKYDKNKPIPCPKCNYDTSVTKDLSMSTRSHKFGRQQQGGNSDDEEGYGGYYGAGGSGYYGGAASGGYSYGGDDDEDESDGDYDDESDEDDDDDEEEDETTESEPEKETDKKATK.

A Nuclear localization signal motif is present at residues 3 to 11 (KKKTGQRKK). 4 consecutive C4-type zinc fingers follow at residues 40–56 (CDKCEKKQKSRAFCYFC), 65–102 (CAQCGKIKCMLKTGDCVVKHPGVYTTGLGMVGAICDFC), 127–147 (CLECERGVWEHGGRIFKCSFC), and 173–187 (CQSCNKLGQYSCLRC). Disordered regions lie at residues 228–248 (TRSHKFGRQQQGGNSDDEEGY) and 263–315 (AASG…KATK). A compositionally biased stretch (acidic residues) spans 272 to 303 (GDDDEDESDGDYDDESDEDDDDDEEEDETTES). Residues 304–315 (EPEKETDKKATK) are compositionally biased toward basic and acidic residues.

It belongs to the NOA36 family.

The protein resides in the nucleus. Its subcellular location is the nucleolus. The protein is Zinc finger protein 330 homolog (Noa36) of Drosophila melanogaster (Fruit fly).